The following is a 184-amino-acid chain: Cytidylate kinase (184 aa).

Position 8–16 (8–16 (GQPGSGKTT)) interacts with ATP.

It belongs to the cytidylate kinase family. Type 2 subfamily.

Its subcellular location is the cytoplasm. The enzyme catalyses CMP + ATP = CDP + ADP. It catalyses the reaction dCMP + ATP = dCDP + ADP. The sequence is that of Cytidylate kinase from Pyrobaculum neutrophilum (strain DSM 2338 / JCM 9278 / NBRC 100436 / V24Sta) (Thermoproteus neutrophilus).